The chain runs to 436 residues: Proteasome-activating nucleotidase (436 aa).

Residues 15–97 (EELCRLYRSL…LKSESEQLRS (83 aa)) are a coiled coil. ATP is bound by residues 222 to 227 (GTGKTL) and His-361. The segment at 434-436 (MFA) is docks into pockets in the proteasome alpha-ring to cause gate opening.

It belongs to the AAA ATPase family. In terms of assembly, homohexamer. The hexameric complex has a two-ring architecture resembling a top hat that caps the 20S proteasome core at one or both ends. Upon ATP-binding, the C-terminus of PAN interacts with the alpha-rings of the proteasome core by binding to the intersubunit pockets.

The protein localises to the cytoplasm. ATPase which is responsible for recognizing, binding, unfolding and translocation of substrate proteins into the archaeal 20S proteasome core particle. Is essential for opening the gate of the 20S proteasome via an interaction with its C-terminus, thereby allowing substrate entry and access to the site of proteolysis. Thus, the C-termini of the proteasomal ATPase function like a 'key in a lock' to induce gate opening and therefore regulate proteolysis. Unfolding activity requires energy from ATP hydrolysis, whereas ATP binding alone promotes ATPase-20S proteasome association which triggers gate opening, and supports translocation of unfolded substrates. The polypeptide is Proteasome-activating nucleotidase (Methanoregula boonei (strain DSM 21154 / JCM 14090 / 6A8)).